We begin with the raw amino-acid sequence, 318 residues long: UDP-N-acetylenolpyruvoylglucosamine reductase (318 aa).

An FAD-binding PCMH-type domain is found at 39-202 (VGGPADLLVR…TRVQLTLRPG (164 aa)). R182 is an active-site residue. Residues 214-223 (DRDGRRRTQP) show a composition bias toward basic and acidic residues. The disordered stretch occupies residues 214-235 (DRDGRRRTQPLDRPTFGSTFTN). The Proton donor role is filled by S231. The active site involves E301.

The protein belongs to the MurB family. Requires FAD as cofactor.

The protein resides in the cytoplasm. It carries out the reaction UDP-N-acetyl-alpha-D-muramate + NADP(+) = UDP-N-acetyl-3-O-(1-carboxyvinyl)-alpha-D-glucosamine + NADPH + H(+). The protein operates within cell wall biogenesis; peptidoglycan biosynthesis. In terms of biological role, cell wall formation. This chain is UDP-N-acetylenolpyruvoylglucosamine reductase, found in Anaeromyxobacter sp. (strain Fw109-5).